The primary structure comprises 380 residues: Two-component response regulator ORR28 (380 aa).

The 118-residue stretch at serine 13 to aspartate 130 folds into the Response regulatory domain. Aspartate 65 is modified (4-aspartylphosphate). Residues arginine 169–lysine 223 constitute a DNA-binding region (myb-like GARP). The disordered stretch occupies residues leucine 225–asparagine 245. Positions alanine 228–asparagine 245 are enriched in polar residues.

The protein belongs to the ARR family. Type-B subfamily. Post-translationally, two-component system major event consists of a His-to-Asp phosphorelay between a sensor histidine kinase (HK) and a response regulator (RR). In plants, the His-to-Asp phosphorelay involves an additional intermediate named Histidine-containing phosphotransfer protein (HPt). This multistep phosphorelay consists of a His-Asp-His-Asp sequential transfer of a phosphate group between first a His and an Asp of the HK protein, followed by the transfer to a conserved His of the HPt protein and finally the transfer to an Asp in the receiver domain of the RR protein.

It is found in the nucleus. Transcriptional activator that binds specific DNA sequence. Functions as a response regulator involved in His-to-Asp phosphorelay signal transduction system. Phosphorylation of the Asp residue in the receiver domain activates the ability of the protein to promote the transcription of target genes. May directly activate some type-A response regulators in response to cytokinins. The sequence is that of Two-component response regulator ORR28 from Oryza sativa subsp. indica (Rice).